An 87-amino-acid polypeptide reads, in one-letter code: Small ribosomal subunit protein bS20 (87 aa).

The tract at residues 1–22 is disordered; sequence MAHHKSAIKRIKQNAKKNARNR.

It belongs to the bacterial ribosomal protein bS20 family.

In terms of biological role, binds directly to 16S ribosomal RNA. The protein is Small ribosomal subunit protein bS20 of Pelobacter propionicus (strain DSM 2379 / NBRC 103807 / OttBd1).